Reading from the N-terminus, the 60-residue chain is Large ribosomal subunit protein bL32 (60 aa).

The disordered stretch occupies residues 1-21 (MAVPRNRHSNARKNIRRSHDA).

The protein belongs to the bacterial ribosomal protein bL32 family.

The chain is Large ribosomal subunit protein bL32 from Chlamydia felis (strain Fe/C-56) (Chlamydophila felis).